Consider the following 92-residue polypeptide: Small ribosomal subunit protein uS19c (92 aa).

This sequence belongs to the universal ribosomal protein uS19 family.

The protein resides in the plastid. It is found in the chloroplast. Functionally, protein S19 forms a complex with S13 that binds strongly to the 16S ribosomal RNA. The protein is Small ribosomal subunit protein uS19c of Manihot esculenta (Cassava).